The chain runs to 1028 residues: Contactin-6 (1028 aa).

Residues 1–19 (MRLLWKLVILLPLINSCAG) form the signal peptide. 6 Ig-like C2-type domains span residues 32–117 (PQDV…AKLQ), 122–208 (EDFE…RSVQ), 227–308 (PKIE…RNLA), 318–402 (PEWE…AELR), 408–502 (PDFS…RTII), and 500–587 (TIIT…ERLS). Intrachain disulfides connect C50–C100, C144–C196, C249–C297, C339–C386, C431–C479, and C521–C577. N65 and N193 each carry an N-linked (GlcNAc...) asparagine glycan. N368, N377, and N468 each carry an N-linked (GlcNAc...) asparagine glycan. Fibronectin type-III domains lie at 600 to 698 (PPED…TKAS), 703 to 800 (APGN…SGED), 805 to 901 (APRG…TKKS), and 902 to 996 (PPSQ…KMSS). N-linked (GlcNAc...) asparagine glycosylation is found at N659, N765, N860, and N865. Position 882 is a phosphotyrosine (Y882). 4 N-linked (GlcNAc...) asparagine glycosylation sites follow: N895, N931, N956, and N957. Residue S999 is the site of GPI-anchor amidated serine attachment. The propeptide at 1000–1028 (TGVQISKPSTQSLSMVGVFYCFAIHPLSR) is removed in mature form.

It belongs to the immunoglobulin superfamily. Contactin family. As to quaternary structure, interacts with PTPRG. Expressed in brain. In brain, it is preferentially expressed in the accessory olfactory bulb, layers II/III and V of the cerebral cortex, piriform cortex, anterior thalamic nuclei, locus coeruleus of the pons and mesencephalic trigeminal nucleus and in Purkinje cells of the cerebellum.

Its subcellular location is the cell membrane. In terms of biological role, contactins mediate cell surface interactions during nervous system development. Participates in oligodendrocytes generation by acting as a ligand of NOTCH1. Its association with NOTCH1 promotes NOTCH1 activation through the released notch intracellular domain (NICD) and subsequent translocation to the nucleus. Involved in motor coordination. This is Contactin-6 (Cntn6) from Mus musculus (Mouse).